Reading from the N-terminus, the 1113-residue chain is Carbamoyl phosphate synthase large chain (1113 aa).

Residues 1-407 (MPKRSDINHV…ALNKALRSLE (407 aa)) are carboxyphosphate synthetic domain. ATP-binding residues include arginine 134, arginine 174, glycine 180, glycine 181, glutamate 213, isoleucine 215, glutamate 220, glycine 246, valine 247, histidine 248, glutamine 290, and glutamate 304. One can recognise an ATP-grasp 1 domain in the interval 138-333 (KDIVTTIGGE…IAKMAAKLAI (196 aa)). Mg(2+) is bound by residues glutamine 290, glutamate 304, and asparagine 306. Mn(2+)-binding residues include glutamine 290, glutamate 304, and asparagine 306. An oligomerization domain region spans residues 408–565 (TKQQGFWTKP…ELDPAAESEV (158 aa)). The tract at residues 566–967 (APQTEREKVL…AYAKAEAGAF (402 aa)) is carbamoyl phosphate synthetic domain. The ATP-grasp 2 domain occupies 695–886 (GALLNREQLP…LAKAASRIAV (192 aa)). Residues arginine 731, arginine 770, leucine 772, glutamate 777, glycine 802, isoleucine 803, histidine 804, serine 805, glutamine 845, and glutamate 857 each contribute to the ATP site. Mg(2+) is bound by residues glutamine 845, glutamate 857, and asparagine 859. Mn(2+) contacts are provided by glutamine 845, glutamate 857, and asparagine 859. The MGS-like domain maps to 968–1113 (GALPTEGTVF…LQELDHAVKA (146 aa)). Residues 968-1113 (GALPTEGTVF…LQELDHAVKA (146 aa)) are allosteric domain.

This sequence belongs to the CarB family. In terms of assembly, composed of two chains; the small (or glutamine) chain promotes the hydrolysis of glutamine to ammonia, which is used by the large (or ammonia) chain to synthesize carbamoyl phosphate. Tetramer of heterodimers (alpha,beta)4. It depends on Mg(2+) as a cofactor. The cofactor is Mn(2+).

The catalysed reaction is hydrogencarbonate + L-glutamine + 2 ATP + H2O = carbamoyl phosphate + L-glutamate + 2 ADP + phosphate + 2 H(+). It catalyses the reaction hydrogencarbonate + NH4(+) + 2 ATP = carbamoyl phosphate + 2 ADP + phosphate + 2 H(+). It functions in the pathway amino-acid biosynthesis; L-arginine biosynthesis; carbamoyl phosphate from bicarbonate: step 1/1. It participates in pyrimidine metabolism; UMP biosynthesis via de novo pathway; (S)-dihydroorotate from bicarbonate: step 1/3. Functionally, large subunit of the glutamine-dependent carbamoyl phosphate synthetase (CPSase). CPSase catalyzes the formation of carbamoyl phosphate from the ammonia moiety of glutamine, carbonate, and phosphate donated by ATP, constituting the first step of 2 biosynthetic pathways, one leading to arginine and/or urea and the other to pyrimidine nucleotides. The large subunit (synthetase) binds the substrates ammonia (free or transferred from glutamine from the small subunit), hydrogencarbonate and ATP and carries out an ATP-coupled ligase reaction, activating hydrogencarbonate by forming carboxy phosphate which reacts with ammonia to form carbamoyl phosphate. In Corynebacterium glutamicum (strain ATCC 13032 / DSM 20300 / JCM 1318 / BCRC 11384 / CCUG 27702 / LMG 3730 / NBRC 12168 / NCIMB 10025 / NRRL B-2784 / 534), this protein is Carbamoyl phosphate synthase large chain.